The chain runs to 85 residues: uncharacterized protein (85 aa).

The protein belongs to the ycf76 family.

The protein resides in the plastid. It localises to the chloroplast. This is an uncharacterized protein from Zea mays (Maize).